A 287-amino-acid polypeptide reads, in one-letter code: 4-hydroxybenzoate octaprenyltransferase (287 aa).

5 consecutive transmembrane segments (helical) span residues 20 to 38, 95 to 115, 211 to 231, 235 to 255, and 266 to 286; these read IGTLLLMWPCLMALWFAAG, IVFLVMALFAFCLVLLLNPLV, IIAAFQFAALACFIIAGLIAE, IYGGGILAFIGFALYQQKLIF, and FLNNNWAGMALFIALGLDYLV.

It belongs to the UbiA prenyltransferase family. It depends on Mg(2+) as a cofactor.

It is found in the cell inner membrane. The catalysed reaction is all-trans-octaprenyl diphosphate + 4-hydroxybenzoate = 4-hydroxy-3-(all-trans-octaprenyl)benzoate + diphosphate. It participates in cofactor biosynthesis; ubiquinone biosynthesis. Functionally, catalyzes the prenylation of para-hydroxybenzoate (PHB) with an all-trans polyprenyl group. Mediates the second step in the final reaction sequence of ubiquinone-8 (UQ-8) biosynthesis, which is the condensation of the polyisoprenoid side chain with PHB, generating the first membrane-bound Q intermediate 3-octaprenyl-4-hydroxybenzoate. The polypeptide is 4-hydroxybenzoate octaprenyltransferase (Shewanella piezotolerans (strain WP3 / JCM 13877)).